The sequence spans 369 residues: Phospho-N-acetylmuramoyl-pentapeptide-transferase (369 aa).

A run of 10 helical transmembrane segments spans residues A3–I23, G53–W73, V81–L101, W118–L138, F162–V182, L198–F218, P240–W260, I267–L287, T290–L310, and F347–I367.

Belongs to the glycosyltransferase 4 family. MraY subfamily. Mg(2+) serves as cofactor.

It localises to the cell membrane. The catalysed reaction is UDP-N-acetyl-alpha-D-muramoyl-L-alanyl-gamma-D-glutamyl-meso-2,6-diaminopimeloyl-D-alanyl-D-alanine + di-trans,octa-cis-undecaprenyl phosphate = di-trans,octa-cis-undecaprenyl diphospho-N-acetyl-alpha-D-muramoyl-L-alanyl-D-glutamyl-meso-2,6-diaminopimeloyl-D-alanyl-D-alanine + UMP. The protein operates within cell wall biogenesis; peptidoglycan biosynthesis. In terms of biological role, catalyzes the initial step of the lipid cycle reactions in the biosynthesis of the cell wall peptidoglycan: transfers peptidoglycan precursor phospho-MurNAc-pentapeptide from UDP-MurNAc-pentapeptide onto the lipid carrier undecaprenyl phosphate, yielding undecaprenyl-pyrophosphoryl-MurNAc-pentapeptide, known as lipid I. The chain is Phospho-N-acetylmuramoyl-pentapeptide-transferase from Clavibacter sepedonicus (Clavibacter michiganensis subsp. sepedonicus).